Consider the following 324-residue polypeptide: Viral cathepsin (324 aa).

The signal sequence occupies residues M1 to C16. A propeptide spans A17–G113 (activation peptide). 3 disulfides stabilise this stretch: C134-C175, C168-C208, and C263-C311. Residue C137 is part of the active site. N159 carries an N-linked (GlcNAc...) asparagine; by host glycan. Residues H270 and N290 contribute to the active site.

Belongs to the peptidase C1 family. Post-translationally, synthesized as an inactive proenzyme and activated by proteolytic removal of the inhibitory propeptide.

It carries out the reaction Endopeptidase of broad specificity, hydrolyzing substrates of both cathepsin L and cathepsin B.. Its function is as follows. Cysteine protease that plays an essential role in host liquefaction to facilitate horizontal transmission of the virus. May participate in the degradation of foreign protein expressed by the baculovirus system. The chain is Viral cathepsin (Vcath) from Choristoneura fumiferana nuclear polyhedrosis virus (CfMNPV).